Consider the following 418-residue polypeptide: Histidine--tRNA ligase (418 aa).

This sequence belongs to the class-II aminoacyl-tRNA synthetase family.

It is found in the cytoplasm. It carries out the reaction tRNA(His) + L-histidine + ATP = L-histidyl-tRNA(His) + AMP + diphosphate + H(+). The polypeptide is Histidine--tRNA ligase (Methanococcus maripaludis (strain C7 / ATCC BAA-1331)).